Reading from the N-terminus, the 487-residue chain is Lysine--tRNA ligase (487 aa).

Residues E398 and E405 each contribute to the Mg(2+) site.

It belongs to the class-II aminoacyl-tRNA synthetase family. As to quaternary structure, homodimer. Mg(2+) serves as cofactor.

It localises to the cytoplasm. It carries out the reaction tRNA(Lys) + L-lysine + ATP = L-lysyl-tRNA(Lys) + AMP + diphosphate. This Mycoplasma mobile (strain ATCC 43663 / 163K / NCTC 11711) (Mesomycoplasma mobile) protein is Lysine--tRNA ligase.